The chain runs to 366 residues: tRNA/tmRNA (uracil-C(5))-methyltransferase (366 aa).

5 residues coordinate S-adenosyl-L-methionine: Gln-188, Tyr-216, Asn-221, Glu-237, and Asp-297. The active-site Nucleophile is the Cys-322. Glu-356 acts as the Proton acceptor in catalysis.

It belongs to the class I-like SAM-binding methyltransferase superfamily. RNA M5U methyltransferase family. TrmA subfamily.

The enzyme catalyses uridine(54) in tRNA + S-adenosyl-L-methionine = 5-methyluridine(54) in tRNA + S-adenosyl-L-homocysteine + H(+). It carries out the reaction uridine(341) in tmRNA + S-adenosyl-L-methionine = 5-methyluridine(341) in tmRNA + S-adenosyl-L-homocysteine + H(+). Its function is as follows. Dual-specificity methyltransferase that catalyzes the formation of 5-methyluridine at position 54 (m5U54) in all tRNAs, and that of position 341 (m5U341) in tmRNA (transfer-mRNA). The protein is tRNA/tmRNA (uracil-C(5))-methyltransferase of Histophilus somni (strain 129Pt) (Haemophilus somnus).